Here is a 229-residue protein sequence, read N- to C-terminus: Probable GTP-binding protein EngB (229 aa).

One can recognise an EngB-type G domain in the interval 53 to 228 (DLPEVAFAGR…RAEIVRLCID (176 aa)). GTP-binding positions include 61–68 (GRSNVGKS), 88–92 (GRTRE), 106–109 (DLPG), 173–176 (TKAD), and 207–209 (TSS). Mg(2+) contacts are provided by Ser-68 and Thr-90.

The protein belongs to the TRAFAC class TrmE-Era-EngA-EngB-Septin-like GTPase superfamily. EngB GTPase family. Mg(2+) is required as a cofactor.

In terms of biological role, necessary for normal cell division and for the maintenance of normal septation. In Caulobacter vibrioides (strain NA1000 / CB15N) (Caulobacter crescentus), this protein is Probable GTP-binding protein EngB.